A 212-amino-acid chain; its full sequence is ER lumen protein-retaining receptor 2 (212 aa).

The Lumenal segment spans residues 1–4 (MNIF). The chain crosses the membrane as a helical span at residues 5-24 (RLTGDLSHLAAIIILLLKIW). Topologically, residues 25–32 (KSRSCAGI) are cytoplasmic. A helical membrane pass occupies residues 33 to 52 (SGKSQLLFALVFTTRYLDLF). The tract at residues 47 to 48 (RY) is interaction with the K-D-E-L motif on target proteins. Residues 53-58 (TSFISL) are Lumenal-facing. The chain crosses the membrane as a helical span at residues 59–79 (YNTSMKLIYIACSYATVYLIY). Over 80–92 (MKFKATYDGNHDT) the chain is Cytoplasmic. The chain crosses the membrane as a helical span at residues 93–110 (FRVEFLIVPVGGLSFLVN). Residues 111–116 (HDFSPL) lie on the Lumenal side of the membrane. A helical membrane pass occupies residues 117 to 135 (EILWTFSIYLESVAILPQL). Over 136 to 149 (FMISKTGEAETITT) the chain is Cytoplasmic. A helical membrane pass occupies residues 150–168 (HYLFFLGLYRALYLVNWIW). The interval 159–169 (RALYLVNWIWR) is interaction with the K-D-E-L motif on target proteins. Over 169–178 (RYYFEGFFDL) the chain is Lumenal. A helical membrane pass occupies residues 179–199 (IAVVAGVVQTVLYCDFFYLYV). At 200 to 212 (TKVLKGKKLSLPA) the chain is on the cytoplasmic side. Residues 204–207 (KGKK) are important for recycling of cargo proteins with the sequence motif K-D-E-L from the Golgi to the endoplasmic reticulum.

It belongs to the ERD2 family.

It localises to the endoplasmic reticulum membrane. It is found in the golgi apparatus membrane. Its subcellular location is the cytoplasmic vesicle. The protein localises to the COPI-coated vesicle membrane. In terms of biological role, membrane receptor that binds the K-D-E-L sequence motif in the C-terminal part of endoplasmic reticulum resident proteins and maintains their localization in that compartment by participating to their vesicle-mediated recycling back from the Golgi. Binding is pH dependent, and is optimal at pH 5-5.4. This Gallus gallus (Chicken) protein is ER lumen protein-retaining receptor 2 (KDELR2).